The chain runs to 230 residues: Large ribosomal subunit protein uL1 (230 aa).

The protein belongs to the universal ribosomal protein uL1 family. Part of the 50S ribosomal subunit.

Functionally, binds directly to 23S rRNA. The L1 stalk is quite mobile in the ribosome, and is involved in E site tRNA release. Protein L1 is also a translational repressor protein, it controls the translation of the L11 operon by binding to its mRNA. The sequence is that of Large ribosomal subunit protein uL1 from Afipia carboxidovorans (strain ATCC 49405 / DSM 1227 / KCTC 32145 / OM5) (Oligotropha carboxidovorans).